The primary structure comprises 179 residues: Segregation and condensation protein B (179 aa).

Belongs to the ScpB family. In terms of assembly, homodimer. Homodimerization may be required to stabilize the binding of ScpA to the Smc head domains. Component of a cohesin-like complex composed of ScpA, ScpB and the Smc homodimer, in which ScpA and ScpB bind to the head domain of Smc. The presence of the three proteins is required for the association of the complex with DNA.

The protein resides in the cytoplasm. Its function is as follows. Participates in chromosomal partition during cell division. May act via the formation of a condensin-like complex containing Smc and ScpA that pull DNA away from mid-cell into both cell halves. This is Segregation and condensation protein B from Streptococcus equi subsp. zooepidemicus (strain H70).